The chain runs to 323 residues: MTEQTSEATVVNNSPAPTIPKIKREKPTPEEIEERRKLKQLEVVPEGFSRKQWKRELKKQRWQDTKQEYLEVQREKKRLARQRKRERLKDLDENDELRKAQPIPSRQISTNNVSVIIDCDFDELMHEKEIVSLSNQIKACYSAMRHCTYKLPIQITSFNKRLKQRFEAQLHDYHLWQGNISFTDRSLTEYVTGAPNSESKDNDGNSNSNTTNSTDTINTENLVYLTADTDEEITKLEPNHTYIIGGIVDKNRHKQLCYNKAKELGIKVARLPIGKYIEMNGRHVLVTSHVYELLCKWFENDGDWETAFNKVLPPRKIKSKSPS.

Positions 1 to 16 (MTEQTSEATVVNNSPA) are enriched in polar residues. 2 disordered regions span residues 1-34 (MTEQ…EIEE) and 192-215 (TGAP…NSTD). Over residues 25-34 (EKPTPEEIEE) the composition is skewed to basic and acidic residues. In terms of domain architecture, SAM-dependent MTase TRM10-type spans 99–319 (KAQPIPSRQI…KVLPPRKIKS (221 aa)). Over residues 204–215 (GNSNSNTTNSTD) the composition is skewed to low complexity. S-adenosyl-L-methionine-binding positions include 225-226 (LT), glycine 245, 249-253 (DKNRH), cysteine 257, leucine 271, and 283-285 (HVL). Catalysis depends on aspartate 249, which acts as the Proton acceptor.

This sequence belongs to the class IV-like SAM-binding methyltransferase superfamily. TRM10 family. Monomer.

Its subcellular location is the cytoplasm. It localises to the nucleus. The catalysed reaction is guanosine(9) in tRNA + S-adenosyl-L-methionine = N(1)-methylguanosine(9) in tRNA + S-adenosyl-L-homocysteine + H(+). In terms of biological role, S-adenosyl-L-methionine-dependent guanine N(1)-methyltransferase that catalyzes the formation of N(1)-methylguanine at position 9 (m1G9) in cytoplasmic tRNA. The polypeptide is tRNA (guanine(9)-N1)-methyltransferase (Candida albicans (strain SC5314 / ATCC MYA-2876) (Yeast)).